The sequence spans 495 residues: Probable leucine aminopeptidase 2 (495 aa).

A signal peptide spans 1–21 (MKSQLLSLAVAVTTISQGVVG). A PA domain is found at 130-216 (MAELVVAKNN…SQEDGKNLAT (87 aa)). Asn142 and Asn235 each carry an N-linked (GlcNAc...) asparagine glycan. Residues His259 and Asp271 each contribute to the Zn(2+) site. N-linked (GlcNAc...) asparagine glycosylation is present at Asn272. Glu303 functions as the Proton acceptor in the catalytic mechanism. Zn(2+) is bound by residues Glu304 and Asp332. Asn352 carries N-linked (GlcNAc...) asparagine glycosylation. Zn(2+) is bound at residue His430.

Belongs to the peptidase M28 family. M28A subfamily. Monomer. Zn(2+) serves as cofactor.

Its subcellular location is the secreted. Extracellular aminopeptidase that releases a wide variety of amino acids from natural peptides and contributes to pathogenicity. In Arthroderma benhamiae (strain ATCC MYA-4681 / CBS 112371) (Trichophyton mentagrophytes), this protein is Probable leucine aminopeptidase 2 (LAP2).